The primary structure comprises 141 residues: Hemoglobin subunit alpha-2 (141 aa).

Positions 1–141 (VLTEDDKNHV…VCKDLVSKYR (141 aa)) constitute a Globin domain. H58 is a binding site for O2. Heme b is bound at residue H87.

It belongs to the globin family. In terms of assembly, the major hemoglobin component (HbIII) is a heterotetramer of two alpha-2 chains and two beta-1 chains. In terms of tissue distribution, red blood cells.

Its function is as follows. Involved in oxygen transport from the lung to the various peripheral tissues. This Varanus albigularis (White-throated monitor) protein is Hemoglobin subunit alpha-2.